An 871-amino-acid chain; its full sequence is Valine--tRNA ligase (871 aa).

The 'HIGH' region signature appears at 47-57 (PNVTGRLHIGH). The short motif at 534–538 (KMSKS) is the 'KMSKS' region element. Position 537 (Lys-537) interacts with ATP. Positions 805–871 (DLTPILNRLN…IEEELARLTR (67 aa)) form a coiled coil.

Belongs to the class-I aminoacyl-tRNA synthetase family. ValS type 1 subfamily. In terms of assembly, monomer.

The protein localises to the cytoplasm. It carries out the reaction tRNA(Val) + L-valine + ATP = L-valyl-tRNA(Val) + AMP + diphosphate. Catalyzes the attachment of valine to tRNA(Val). As ValRS can inadvertently accommodate and process structurally similar amino acids such as threonine, to avoid such errors, it has a 'posttransfer' editing activity that hydrolyzes mischarged Thr-tRNA(Val) in a tRNA-dependent manner. This Nitratiruptor sp. (strain SB155-2) protein is Valine--tRNA ligase.